The chain runs to 165 residues: 2S seed storage protein 5 (165 aa).

Residues 1–20 form the signal peptide; the sequence is MAKLILVFATLALFILLANA. 2 consecutive propeptides follow at residues 21-37 and 71-89; these read SIYR…DVSN and YEAD…DDEN.

This sequence belongs to the 2S seed storage albumins family. As to quaternary structure, the mature protein consists of a small and a large chain linked by disulfide bonds.

In terms of biological role, this is a 2S seed storage protein. This is 2S seed storage protein 5 (SESA5) from Arabidopsis thaliana (Mouse-ear cress).